The primary structure comprises 475 residues: NADH-ubiquinone oxidoreductase chain 2 (475 aa).

A run of 13 helical transmembrane segments spans residues 45–65 (LAVLALSFVAYLAWESIGIQY), 82–102 (APIVLLLIILVITLLVYLTTT), 112–132 (IALLMLVNLIGLILFPMVNDL), 133–153 (IPLYVIIELQSYSLYLLTGVY), 162–182 (AAILYFVTGGIASVLILLSSA), 198–220 (TYYSISGINTWTSFDILLIALVF), 240–260 (LYITAYISIVAKVSIMSFIYL), 262–282 (IHLFSTQLLILAFYLSVAVAA), 291–311 (IKSILAYSGILNFGYLLTAVL), 318–338 (YIYIIQYSLTHVTIFLCILAI), 365–385 (LCIALIVCLFSLIGIPPLPGF), 402–422 (LEALTIIVFSVIATYYYAYII), and 447–467 (FIISILMVILITFYMYLPTLL).

The protein belongs to the complex I subunit 2 family.

It localises to the mitochondrion inner membrane. The catalysed reaction is a ubiquinone + NADH + 5 H(+)(in) = a ubiquinol + NAD(+) + 4 H(+)(out). Functionally, core subunit of the mitochondrial membrane respiratory chain NADH dehydrogenase (Complex I) that is believed to belong to the minimal assembly required for catalysis. Complex I functions in the transfer of electrons from NADH to the respiratory chain. The immediate electron acceptor for the enzyme is believed to be ubiquinone. This chain is NADH-ubiquinone oxidoreductase chain 2 (NAD2), found in Candida albicans (strain SC5314 / ATCC MYA-2876) (Yeast).